A 304-amino-acid chain; its full sequence is Ribosomal RNA large subunit methyltransferase F (304 aa).

Belongs to the methyltransferase superfamily. METTL16/RlmF family.

Its subcellular location is the cytoplasm. The catalysed reaction is adenosine(1618) in 23S rRNA + S-adenosyl-L-methionine = N(6)-methyladenosine(1618) in 23S rRNA + S-adenosyl-L-homocysteine + H(+). In terms of biological role, specifically methylates the adenine in position 1618 of 23S rRNA. This Klebsiella pneumoniae subsp. pneumoniae (strain ATCC 700721 / MGH 78578) protein is Ribosomal RNA large subunit methyltransferase F.